The chain runs to 484 residues: Glycogen synthase 2 (484 aa).

Arg-15 contributes to the ADP-alpha-D-glucose binding site.

The protein belongs to the glycosyltransferase 1 family. Bacterial/plant glycogen synthase subfamily.

It carries out the reaction [(1-&gt;4)-alpha-D-glucosyl](n) + ADP-alpha-D-glucose = [(1-&gt;4)-alpha-D-glucosyl](n+1) + ADP + H(+). It participates in glycan biosynthesis; glycogen biosynthesis. Synthesizes alpha-1,4-glucan chains using ADP-glucose. The chain is Glycogen synthase 2 from Geobacter sulfurreducens (strain ATCC 51573 / DSM 12127 / PCA).